An 82-amino-acid polypeptide reads, in one-letter code: MQNEEGQVTELYIPRKCSATNRLITSKDHASVQLNIGHLDANGLYTGQFTTFALCGFVRAQGDADSGVDRLWQKKKVEAKQN.

Methionine 1 is subject to N-acetylmethionine.

This sequence belongs to the eukaryotic ribosomal protein eS21 family.

This is Small ribosomal subunit protein eS21y (RPS21C) from Arabidopsis thaliana (Mouse-ear cress).